Consider the following 145-residue polypeptide: MLNPSRYRILAIGKTRKAWIQNGLNLYIKRLPGLTITELKDSDLKKEAQSIRSSIKTNELLIILTEEGESLTSLGFANRLKSLGSSRLLFVIGSANGLDSEIKAMANWSISLSPLTFPHEIARLLLIEQLYRAKNICEGGSYHRN.

S-adenosyl-L-methionine-binding positions include Leu64, Gly93, and 112–117 (LSPLTF).

Belongs to the RNA methyltransferase RlmH family. In terms of assembly, homodimer.

The protein localises to the cytoplasm. The enzyme catalyses pseudouridine(1915) in 23S rRNA + S-adenosyl-L-methionine = N(3)-methylpseudouridine(1915) in 23S rRNA + S-adenosyl-L-homocysteine + H(+). Specifically methylates the pseudouridine at position 1915 (m3Psi1915) in 23S rRNA. The sequence is that of Ribosomal RNA large subunit methyltransferase H from Prochlorococcus marinus (strain MIT 9211).